The primary structure comprises 211 residues: MGNAWSKSKFAGWSEVRDRMRRSSSDPQQPCAPGVGAVSRELATRGGISSSHTPQNNAALAFLDSHKDEDVGFPVRPQVPLRPMTFKAAFDLSFFLKEKGGLDGLIYSHKRAEILDLWIYHTQGFFPDWQCYTPGPGPRFPLTFGWLFKLVPVSAEEAERLGNTNEDASLLHPACNHGAEDAHGEILKWQFDRSLGLTHIALQKHPELFPK.

A disordered region spans residues 1-38; sequence MGNAWSKSKFAGWSEVRDRMRRSSSDPQQPCAPGVGAV. The N-myristoyl glycine; by host moiety is linked to residue Gly2. Ser6 carries the post-translational modification Phosphoserine; by host. The segment covering 15–24 has biased composition (basic and acidic residues); it reads EVRDRMRRSS. The acidic; interacts with host PACS1 and PACS2; stabilizes the interaction of NEF/MHC-I with host AP1M1; necessary for MHC-I internalization stretch occupies residues 67-70; it reads KDED. The segment at 74–83 is SH3-binding; interaction with Src family tyrosine kinases; it reads PVRPQVPLRP. Positions 77-80 match the PxxP; stabilizes the interaction of NEF/MHC-I with host AP1M1; necessary for MHC-I internalization motif; that stretch reads PQVP. The segment at 113-129 is mediates dimerization, Nef-PTE1 interaction; it reads EILDLWIYHTQGFFPDW. Residues 153-186 form a binding to ATP6V1H region; it reads VSAEEAERLGNTNEDASLLHPACNHGAEDAHGEI. Residues 170-171 carry the Dileucine internalization motif; necessary for CD4 internalization motif; sequence LL. A Diacidic; necessary for CD4 internalization motif is present at residues 180–181; it reads ED.

It belongs to the lentivirus primate group Nef protein family. Monomer; cytosolic form. Homodimer; membrane bound form. Interacts with Nef associated p21-activated kinase (PAK2); this interaction activates PAK2. Associates with the Nef-MHC-I-AP1 complex; this complex is required for MHC-I internalization. Interacts (via C-terminus) with host PI3-kinase. Interacts with host PACS1; this interaction seems to be weak. Interacts with host PACS2. Interacts with host LCK and MAPK3; these interactions inhibit the kinase activity of the latter. Interacts with host ATP6V1H; this interaction may play a role in CD4 endocytosis. Associates with the CD4-Nef-AP2 complex; this complex is required for CD4 internalization. Interacts with host AP2 subunit alpha and AP2 subunit sigma2. Interacts with TCR-zeta chain; this interaction up-regulates the Fas ligand (FasL) surface expression. Interacts with host HCK, LYN, and SRC; these interactions activate the Src family kinases. Interacts with MAP3K5; this interaction inhibits the Fas and TNFR-mediated death signals. Interacts with beta-COP and PTE1. Interacts with human RACK1; this increases Nef phosphorylation by PKC. Interacts with TP53; this interaction decreases the half-life of TP53, protecting the infected cell against p53-mediated apoptosis. The virion-associated Nef proteins are cleaved by the viral protease to release the soluble C-terminal core protein. Nef is probably cleaved concomitantly with viral structural proteins on maturation of virus particles. Post-translationally, myristoylated. In terms of processing, phosphorylated on serine residues, probably by host PKCdelta and theta.

Its subcellular location is the host cell membrane. It is found in the virion. The protein localises to the secreted. It localises to the host Golgi apparatus membrane. Functionally, factor of infectivity and pathogenicity, required for optimal virus replication. Alters numerous pathways of T-lymphocyte function and down-regulates immunity surface molecules in order to evade host defense and increase viral infectivity. Alters the functionality of other immunity cells, like dendritic cells, monocytes/macrophages and NK cells. In infected CD4(+) T-lymphocytes, down-regulates the surface MHC-I, mature MHC-II, CD4, CD28, CCR5 and CXCR4 molecules. Mediates internalization and degradation of host CD4 through the interaction of with the cytoplasmic tail of CD4, the recruitment of AP-2 (clathrin adapter protein complex 2), internalization through clathrin coated pits, and subsequent transport to endosomes and lysosomes for degradation. Diverts host MHC-I molecules to the trans-Golgi network-associated endosomal compartments by an endocytic pathway to finally target them for degradation. MHC-I down-regulation may involve AP-1 (clathrin adapter protein complex 1) or possibly Src family kinase-ZAP70/Syk-PI3K cascade recruited by PACS2. In consequence infected cells are masked for immune recognition by cytotoxic T-lymphocytes. Decreasing the number of immune receptors also prevents reinfection by more HIV particles (superinfection). Down-regulates host SERINC3 and SERINC5 thereby excluding these proteins from the viral particles. Virion infectivity is drastically higher when SERINC3 or SERINC5 are excluded from the viral envelope, because these host antiviral proteins impair the membrane fusion event necessary for subsequent virion penetration. Its function is as follows. Bypasses host T-cell signaling by inducing a transcriptional program nearly identical to that of anti-CD3 cell activation. Interaction with TCR-zeta chain up-regulates the Fas ligand (FasL). Increasing surface FasL molecules and decreasing surface MHC-I molecules on infected CD4(+) cells send attacking cytotoxic CD8+ T-lymphocytes into apoptosis. In terms of biological role, plays a role in optimizing the host cell environment for viral replication without causing cell death by apoptosis. Protects the infected cells from apoptosis in order to keep them alive until the next virus generation is ready to strike. Inhibits the Fas and TNFR-mediated death signals by blocking MAP3K5/ASK1. Decreases the half-life of TP53, protecting the infected cell against p53-mediated apoptosis. Inhibits the apoptotic signals regulated by the Bcl-2 family proteins through the formation of a Nef/PI3-kinase/PAK2 complex that leads to activation of PAK2 and induces phosphorylation of host BAD. Functionally, extracellular Nef protein targets CD4(+) T-lymphocytes for apoptosis by interacting with CXCR4 surface receptors. The chain is Protein Nef from Human immunodeficiency virus type 1 group O (isolate MVP5180) (HIV-1).